A 157-amino-acid chain; its full sequence is Small ribosomal subunit protein uS7 (157 aa).

This sequence belongs to the universal ribosomal protein uS7 family. As to quaternary structure, part of the 30S ribosomal subunit. Contacts proteins S9 and S11.

One of the primary rRNA binding proteins, it binds directly to 16S rRNA where it nucleates assembly of the head domain of the 30S subunit. Is located at the subunit interface close to the decoding center, probably blocks exit of the E-site tRNA. In Borreliella afzelii (strain PKo) (Borrelia afzelii), this protein is Small ribosomal subunit protein uS7.